A 121-amino-acid polypeptide reads, in one-letter code: Alpha-endosulfine (121 aa).

Residues 1-53 (MSQKQEEENPAEETGEEKQDTQEKEGILPEKAEEAKLKAKYPSLGQKPGGSDF) form a disordered region. Ser2 is subject to N-acetylserine. Residue Ser2 is modified to Phosphoserine. Over residues 16–37 (EEKQDTQEKEGILPEKAEEAKL) the composition is skewed to basic and acidic residues. Thr21 is modified (phosphothreonine). Ser43 carries the phosphoserine modification. A Phosphoserine; by GWL modification is found at Ser67. The segment at 79 to 121 (NKQLPSAGPDKNLVTGDHIPTPQDLPQRKSSLVTSKLAGGQVE) is disordered. Ser109 bears the Phosphoserine; by PKA mark.

It belongs to the endosulfine family. In terms of assembly, interacts (when phosphorylated at Ser-67) with PPP2R2D. Interacts with ABCC8. Interacts with SNCA; interaction is disrupted when phosphorylated at Ser-109. In terms of processing, phosphorylation at Ser-67 by GWL during mitosis is essential for interaction with PPP2R2D (PR55-delta) and subsequent inactivation of PP2A. Phosphorylated by PKA.

It is found in the cytoplasm. Its function is as follows. Protein phosphatase inhibitor that specifically inhibits protein phosphatase 2A (PP2A) during mitosis. When phosphorylated at Ser-67 during mitosis, specifically interacts with PPP2R2D (PR55-delta) and inhibits its activity, leading to inactivation of PP2A, an essential condition to keep cyclin-B1-CDK1 activity high during M phase. Also acts as a stimulator of insulin secretion by interacting with sulfonylurea receptor (ABCC8), thereby preventing sulfonylurea from binding to its receptor and reducing K(ATP) channel currents. This is Alpha-endosulfine (ENSA) from Bos taurus (Bovine).